A 259-amino-acid chain; its full sequence is uncharacterized protein (259 aa).

This is an uncharacterized protein from Aquifex aeolicus (strain VF5).